We begin with the raw amino-acid sequence, 106 residues long: UPF0145 protein BF0270 (106 aa).

This sequence belongs to the UPF0145 family.

The polypeptide is UPF0145 protein BF0270 (Bacteroides fragilis (strain YCH46)).